The chain runs to 244 residues: 2,3-bisphosphoglycerate-dependent phosphoglycerate mutase (244 aa).

Substrate contacts are provided by residues 8–15, 21–22, R60, 87–90, K98, 114–115, and 181–182; these read RHGESNWN, TG, ERHY, RR, and GN. Residue H9 is the Tele-phosphohistidine intermediate of the active site. Catalysis depends on E87, which acts as the Proton donor/acceptor.

Belongs to the phosphoglycerate mutase family. BPG-dependent PGAM subfamily.

It carries out the reaction (2R)-2-phosphoglycerate = (2R)-3-phosphoglycerate. The protein operates within carbohydrate degradation; glycolysis; pyruvate from D-glyceraldehyde 3-phosphate: step 3/5. In terms of biological role, catalyzes the interconversion of 2-phosphoglycerate and 3-phosphoglycerate. The polypeptide is 2,3-bisphosphoglycerate-dependent phosphoglycerate mutase (Frankia alni (strain DSM 45986 / CECT 9034 / ACN14a)).